Here is a 253-residue protein sequence, read N- to C-terminus: Phycoerythrobilin:ferredoxin oxidoreductase (253 aa).

The protein belongs to the HY2 family.

It catalyses the reaction (3Z)-phycoerythrobilin + oxidized 2[4Fe-4S]-[ferredoxin] = 15,16-dihydrobiliverdin + reduced 2[4Fe-4S]-[ferredoxin] + 2 H(+). In terms of biological role, catalyzes the two-electron reduction of the C2 and C3(1) diene system of 15,16-dihydrobiliverdin. This is Phycoerythrobilin:ferredoxin oxidoreductase from Prochlorococcus marinus (strain MIT 9301).